The sequence spans 420 residues: MNIFNKNLHETDKEINEIIKHEKLRQSSVIELIASENFVSPAVLEAQGSLLTNKYAEGYPSKRFYNGCEEVDKAENLAIERVKKLFNCKYANVQPHSGSQANQAVYLALLQPGDTVLGMSLDSGGHLTHGAAPNMSGKWFNVVSYSVNKETYLIDYDEIERLADLHKPKLLIAGFSAYPRNIDFAKFREIVDKVGAYFMADIAHIAGLVATGEHQSPIPYAHAVTSTTHKTLRGPRGGLILSNDEEIGQKINSALFPGLQGGPLMHIIAAKAVAFLENLQPEYKSYIQQVISNAKALASSLQERGYDILTGGTDNHIVLVDLRKDGITGKFAANSLDRAGITCNKNAIPFDETSPFITSGIRLGTPACTTRGFKEKDFVLVGYMVADILDGLKNNEDNSDLEQKVLNEVTKLIKLFPFYG.

(6S)-5,6,7,8-tetrahydrofolate-binding positions include Leu121 and 125–127 (GHL). Lys230 carries the N6-(pyridoxal phosphate)lysine modification. (6S)-5,6,7,8-tetrahydrofolate-binding positions include Glu246 and 354–356 (SPF).

Belongs to the SHMT family. As to quaternary structure, homodimer. Requires pyridoxal 5'-phosphate as cofactor.

It is found in the cytoplasm. The catalysed reaction is (6R)-5,10-methylene-5,6,7,8-tetrahydrofolate + glycine + H2O = (6S)-5,6,7,8-tetrahydrofolate + L-serine. The protein operates within one-carbon metabolism; tetrahydrofolate interconversion. It functions in the pathway amino-acid biosynthesis; glycine biosynthesis; glycine from L-serine: step 1/1. Its function is as follows. Catalyzes the reversible interconversion of serine and glycine with tetrahydrofolate (THF) serving as the one-carbon carrier. This reaction serves as the major source of one-carbon groups required for the biosynthesis of purines, thymidylate, methionine, and other important biomolecules. Also exhibits THF-independent aldolase activity toward beta-hydroxyamino acids, producing glycine and aldehydes, via a retro-aldol mechanism. The sequence is that of Serine hydroxymethyltransferase from Rickettsia massiliae (strain Mtu5).